The sequence spans 388 residues: Succinate--CoA ligase [ADP-forming] subunit beta (388 aa).

Residues 9 to 244 (KALFAEYGLP…PSQDDAREAH (236 aa)) enclose the ATP-grasp domain. Residues lysine 46, 53 to 55 (GRG), glutamate 99, threonine 102, and glutamate 107 contribute to the ATP site. Residues asparagine 199 and aspartate 213 each contribute to the Mg(2+) site. Substrate is bound by residues asparagine 264 and 321–323 (GIV).

The protein belongs to the succinate/malate CoA ligase beta subunit family. In terms of assembly, heterotetramer of two alpha and two beta subunits. Requires Mg(2+) as cofactor.

It catalyses the reaction succinate + ATP + CoA = succinyl-CoA + ADP + phosphate. The enzyme catalyses GTP + succinate + CoA = succinyl-CoA + GDP + phosphate. Its pathway is carbohydrate metabolism; tricarboxylic acid cycle; succinate from succinyl-CoA (ligase route): step 1/1. Its function is as follows. Succinyl-CoA synthetase functions in the citric acid cycle (TCA), coupling the hydrolysis of succinyl-CoA to the synthesis of either ATP or GTP and thus represents the only step of substrate-level phosphorylation in the TCA. The beta subunit provides nucleotide specificity of the enzyme and binds the substrate succinate, while the binding sites for coenzyme A and phosphate are found in the alpha subunit. The sequence is that of Succinate--CoA ligase [ADP-forming] subunit beta from Shewanella halifaxensis (strain HAW-EB4).